The chain runs to 202 residues: Prephenate decarboxylase (202 aa).

It belongs to the prephenate decarboxylase family.

It catalyses the reaction prephenate + H(+) = 3-[(4R)-4-hydroxycyclohexa-1,5-dien-1-yl]-2-oxopropanoate + CO2. In terms of biological role, in vivo, involved in the biosynthesis of 2-carboxy-6-hydroxyoctahydroindole (Choi) present in the nonribosomal glycopeptides aeruginoside 126A and B. AerD is an unusual prephenate decarboxylase that avoids the typical aromatization of the cyclohexadienol ring of prephenate. AerD catalyzes the protonation at C8 followed by decarboxylation to produce the dihydro-4-hydroxyphenylpyruvate regioisomer A258 (H2HPP A258)(3-(4-hydroxycyclohexa- 1,5-dienyl)-2-oxopropanoic acid), which is able to undergo a nonenzymatic isomerization to produce dihydro-4-hydroxyphenylpyruvate regioisomer A295 (H2HPP A295)(3-(4-hydroxycyclohex-2-enylidene)-2-oxopropanoic acid). The polypeptide is Prephenate decarboxylase (Planktothrix agardhii (strain NIVA-CYA 126/8)).